A 78-amino-acid polypeptide reads, in one-letter code: MDLKEQIVEILNTIIGEDISDQMDDDFFENGLLDSMATVELLLDLESKFNIQAPVSEFNRDEWNTPNKVVAKVESLIG.

The Carrier domain occupies M1 to I77. S35 is modified (O-(pantetheine 4'-phosphoryl)serine).

This sequence belongs to the DltC family. 4'-phosphopantetheine is transferred from CoA to a specific serine of apo-DCP.

The protein resides in the cytoplasm. Its pathway is cell wall biogenesis; lipoteichoic acid biosynthesis. Functionally, carrier protein involved in the D-alanylation of lipoteichoic acid (LTA). The loading of thioester-linked D-alanine onto DltC is catalyzed by D-alanine--D-alanyl carrier protein ligase DltA. The DltC-carried D-alanyl group is further transferred to cell membrane phosphatidylglycerol (PG) by forming an ester bond, probably catalyzed by DltD. D-alanylation of LTA plays an important role in modulating the properties of the cell wall in Gram-positive bacteria, influencing the net charge of the cell wall. The protein is D-alanyl carrier protein of Leuconostoc mesenteroides subsp. mesenteroides (strain ATCC 8293 / DSM 20343 / BCRC 11652 / CCM 1803 / JCM 6124 / NCDO 523 / NBRC 100496 / NCIMB 8023 / NCTC 12954 / NRRL B-1118 / 37Y).